The following is a 326-amino-acid chain: Ribose operon repressor (326 aa).

In terms of domain architecture, HTH lacI-type spans 1-56; the sequence is MATIKDVAGAAGVSVATVSRNLNDNGYVHEETRTRVIAAMAKLNYYPNEVARSLYK. Residues 4–23 constitute a DNA-binding region (H-T-H motif); sequence IKDVAGAAGVSVATVSRNLN.

Transcriptional repressor for the ribose rbsDACBK operon. The chain is Ribose operon repressor (rbsR) from Bacillus subtilis (strain 168).